The chain runs to 1292 residues: Sorbin and SH3 domain-containing protein 1 (1292 aa).

Disordered regions lie at residues 1–29, 73–158, 214–275, and 318–381; these read MSSE…ATAD, LRAS…AQPE, HLQR…SSPL, and REQQ…MDEV. Residues 74-89 show a composition bias toward low complexity; the sequence is RASSSYRETPSSSPAS. The residue at position 82 (Thr-82) is a Phosphothreonine. Phosphoserine occurs at positions 86 and 89. The segment covering 93–102 has biased composition (basic and acidic residues); the sequence is TRQHESKPGL. Phosphoserine is present on residues Glu-105, Leu-114, Val-137, Ser-146, Ser-242, and Ser-259. Positions 114–128 are enriched in polar residues; it reads LSSSADANGNAQPSS. Residues 240-252 show a composition bias toward pro residues; the sequence is SFSPPPPLVPPAP. Over residues 266 to 275 the composition is skewed to polar residues; that stretch reads AVSSTDSSPL. Phosphoserine is present on Ser-341. At Thr-344 the chain carries Phosphothreonine. Phosphoserine is present on residues Glu-346 and Ser-350. Positions 354-365 are enriched in basic and acidic residues; the sequence is AIEKRAKDDSRR. The 104-residue stretch at 366 to 469 folds into the SoHo domain; the sequence is VVKSTQDLSD…YSPRYSFSED (104 aa). Phosphoserine occurs at positions 369, 374, and 387. Residues 405-534 form a disordered region; that stretch reads LNRDTPEENP…TRKYRAEPKS (130 aa). Over residues 437–450 the composition is skewed to polar residues; it reads YTPTYQFPASTPSP. Phosphoserine occurs at positions 452, 465, 469, 472, 478, and 481. Positions 510–534 are enriched in basic and acidic residues; that stretch reads SSERNDWEPPDKKVDTRKYRAEPKS. Position 536 is a phosphotyrosine; by ABL1 (Tyr-536). Phosphoserine occurs at positions 556, 603, 609, and 640. Residues 628–650 form a disordered region; that stretch reads APSANVPQSSAISPTPEISSETP. Tyr-654 is subject to Phosphotyrosine; by ABL1. Phosphoserine is present on residues Ser-665 and Lys-700. The disordered stretch occupies residues 692 to 716; the sequence is PLQGLSGLKRPSSSASTKDSESPRH. Thr-708 carries the phosphothreonine modification. Phosphoserine occurs at positions 713, 730, 735, and 765. Positions 793–852 constitute an SH3 1 domain; that stretch reads SEMRPARAKFDFKAQTLKELPLQKGDIVYIYKQIDQNWYEGEHHGRVGIFPRTYIELLPP. Phosphothreonine is present on Thr-862. The SH3 2 domain maps to 867-928; sequence LEYGEAIAKF…PITYVDVIKR (62 aa). The residue at position 923 (Val-923) is a Phosphoserine. Residue Tyr-937 is modified to Phosphotyrosine. The span at 944–954 shows a compositional bias: low complexity; the sequence is SSPSRSATASP. Disordered stretches follow at residues 944–976, 1041–1064, 1106–1150, and 1162–1230; these read SSPS…SRRA, SDRP…TYSL, QLSD…KKSC, and TEQR…SQTS. Phosphoserine occurs at positions 945 and 953. The segment covering 955-971 has biased composition (polar residues); the sequence is QFSSHSKLITPAPSSLP. The segment covering 1106–1117 has biased composition (polar residues); the sequence is QLSDAFSSQSKR. A compositionally biased stretch (basic and acidic residues) spans 1119–1136; the sequence is PWREESGQYERKAERGAG. Positions 1162 to 1172 are enriched in polar residues; the sequence is TEQRLSDLNTP. The span at 1192–1203 shows a compositional bias: basic and acidic residues; that stretch reads QTERHRGGEQAG. Residues 1211–1230 show a composition bias toward polar residues; that stretch reads GSQQPQAQQRRVTPDRSQTS. Phosphoserine is present on Gln-1213. The SH3 3 domain occupies 1231 to 1292; that stretch reads QDLFSYQALY…PGNYVKPLYL (62 aa). The residue at position 1240 (Tyr-1240) is a Phosphotyrosine; by ABL1.

In terms of assembly, interacts (via third SH3 domain) with the Ten-1 ICD form of TENM1; the interaction induces the translocation of SORBS1 to the nucleus. Interacts with INSM1. Interacts with the long isoform of AFDN and with VCL. AFDN and VCL bind to SORBS1 in a competitive manner and do not form a ternary complex. Interacts with ABL1, CBL, CBLB and INPPL1/SHIP2 through the third SH3 domain. Interaction with ABL1 occurs only after insulin stimulation while this has no effect on the interaction with INPPL1. Interacts with the insulin receptor but dissociates from it following insulin stimulation. Also interacts with SCA7, PTK2/FAK1 and flotillin. Interacts (via SH3 domain 2) with PXN. Post-translationally, O-glycosylated. In terms of tissue distribution, detected in skeletal muscle (at protein level). Widely expressed with highest levels in heart and skeletal muscle.

It is found in the cell junction. The protein localises to the adherens junction. It localises to the cell membrane. Its subcellular location is the cytoplasm. The protein resides in the cytoskeleton. It is found in the focal adhesion. The protein localises to the nucleus. It localises to the nucleus matrix. In terms of biological role, plays a role in tyrosine phosphorylation of CBL by linking CBL to the insulin receptor. Required for insulin-stimulated glucose transport. Involved in formation of actin stress fibers and focal adhesions. The protein is Sorbin and SH3 domain-containing protein 1 of Homo sapiens (Human).